The chain runs to 121 residues: Colipase-like protein 1 (121 aa).

An N-terminal signal peptide occupies residues M1–G23. Disulfide bonds link C39-C50, C45-C61, C49-C83, C71-C91, and C85-C107.

The protein belongs to the colipase family. As to expression, exclusively expressed in epididymis, in the corpus region.

The protein localises to the secreted. This Homo sapiens (Human) protein is Colipase-like protein 1 (CLPSL1).